The chain runs to 572 residues: Sorting nexin 2B (572 aa).

2 disordered regions span residues methionine 1–leucine 97 and serine 114–serine 136. Residues glutamate 9–proline 30 are compositionally biased toward basic and acidic residues. The segment covering threonine 32–phenylalanine 53 has biased composition (polar residues). The segment covering serine 124–serine 136 has biased composition (low complexity). Serine 133 is subject to Phosphoserine. The PX domain occupies serine 147–leucine 266. A 1,2-diacyl-sn-glycero-3-phospho-(1D-myo-inositol-3-phosphate) is bound by residues arginine 190, lysine 216, and arginine 233. In terms of domain architecture, BAR spans leucine 318–serine 572.

It belongs to the sorting nexin family. Homodimer. Heterodimer with SNX1 or SNX2B. Component of the retromer complex which consists of VPS29 (MAG1), VPS26 (VPS26A or VPS26B), VPS35 (VPS35A or VPS35B or VPS35C), VPS5/17 (SNX1 or SNX2A or SNX2B). As to expression, ubiquitously expressed.

It localises to the cytoplasm. Its subcellular location is the endosome membrane. It is found in the prevacuolar compartment membrane. The protein localises to the golgi apparatus. The protein resides in the trans-Golgi network membrane. Its function is as follows. Plays a role in vesicular protein sorting. Acts at the crossroads between the secretory and endocytic pathways. Is involved in the endosome to vacuole protein transport and, as component of the membrane-associated retromer complex, is also involved in endosome-to-Golgi retrograde transport. In Arabidopsis thaliana (Mouse-ear cress), this protein is Sorting nexin 2B (SNX2B).